Reading from the N-terminus, the 45-residue chain is Osteocalcin (45 aa).

One can recognise a Gla domain in the interval 1-44 (AGTAXGDLTPFQLESLREVCEVNLACEHMADTXGIVAAYTAYYG). Residues glutamate 14, glutamate 18, glutamate 21, and glutamate 27 each contribute to the Ca(2+) site. 4-carboxyglutamate occurs at positions 14, 18, and 21. A disulfide bond links cysteine 20 and cysteine 26.

It belongs to the osteocalcin/matrix Gla protein family. Gamma-carboxyglutamate residues are formed by vitamin K dependent carboxylation by GGCX. These residues are essential for the binding of calcium.

Its subcellular location is the secreted. Its function is as follows. The carboxylated form is one of the main organic components of the bone matrix, which constitutes 1-2% of the total bone protein. The carboxylated form binds strongly to apatite and calcium. The sequence is that of Osteocalcin (bglap) from Danio rerio (Zebrafish).